Reading from the N-terminus, the 827-residue chain is Periplasmic nitrate reductase (827 aa).

Positions 1 to 32 form a signal peptide, tat-type signal; the sequence is MNLSRRDFMKANAALAAASVAGLIIPVKNVNA. A 4Fe-4S Mo/W bis-MGD-type domain is found at 37–93; the sequence is ITWDKAVCRFCGTGCAVLVGTKDGRVVASQGDPDAEVNRGLNCIKGYFLPKIMYGKD. Residues Cys44, Cys47, Cys51, and Cys79 each contribute to the [4Fe-4S] cluster site. Residues Lys81, Gln148, Asn173, Cys177, 210–217, 242–246, 261–263, Met372, Gln376, Asn482, 508–509, Lys531, Asp558, and 717–726 contribute to the Mo-bis(molybdopterin guanine dinucleotide) site; these read WGSNMAEM, STFEH, QSD, SD, and TGRILEHWHT. Phe793 contacts substrate. Mo-bis(molybdopterin guanine dinucleotide)-binding residues include Asn801 and Lys818.

This sequence belongs to the prokaryotic molybdopterin-containing oxidoreductase family. NasA/NapA/NarB subfamily. In terms of assembly, component of the periplasmic nitrate reductase NapAB complex composed of NapA and NapB. [4Fe-4S] cluster is required as a cofactor. The cofactor is Mo-bis(molybdopterin guanine dinucleotide). Predicted to be exported by the Tat system. The position of the signal peptide cleavage has not been experimentally proven.

Its subcellular location is the periplasm. The catalysed reaction is 2 Fe(II)-[cytochrome] + nitrate + 2 H(+) = 2 Fe(III)-[cytochrome] + nitrite + H2O. Catalytic subunit of the periplasmic nitrate reductase complex NapAB. Receives electrons from NapB and catalyzes the reduction of nitrate to nitrite. In Histophilus somni (strain 129Pt) (Haemophilus somnus), this protein is Periplasmic nitrate reductase.